Consider the following 557-residue polypeptide: MDGAREVRSPRGSTLTARSWQTEAPLRMLMNNLDPDVAERPDDLVVYGGTGRAARDWASYDGIVRTLTTLGDDETLLVQSGRPVGVLRTHEWAPRVLIANSNLVPDWATWPEFRRLEHLGLTMYGQMTAGSWIYIGTQGILQGTYETFAAVAEKVGRPDDDGVASLAGTLTLTAGCGGMGGAQPLAVTLNGGVCLVVDVDPERLRRRVATRYLDEVADGLDDAVARCEAAKLERRALSVGLVGNAATVYPELLRRGVEIDVVTDQTSAHDPLSYLPEGVELGEWHEAAEAKPEEFTDRARESMARQVAAMVGFLDAGAEVFDYGNSIRDEARQGGYDRAFAFPGFVPAYIRPLFSEGKGPFRWAALSGDPADIAATDRAVLDLFPDDAKLHRWIRAAGERVAYQGLPARICWLGYGERHLAGLRFNEMVASGELSAPIVIGRDHLDAGSVASPYRETEAMADGSDAIADWPLLNALVNTASGATWVSIHHGGGVGIGRSIHAGQVSVADGTELAAAKLERVLTNDPGMGVIRHVDAGYARADEVAAERGVRVPMRES.

Residues 48–49 (GG), glutamine 126, 178–180 (GMG), aspartate 198, arginine 203, 244–245 (NA), 265–269 (QTSAH), 274–275 (YL), and tyrosine 323 contribute to the NAD(+) site. The active site involves cysteine 411. NAD(+) is bound at residue glycine 493.

This sequence belongs to the urocanase family. NAD(+) is required as a cofactor.

Its subcellular location is the cytoplasm. It carries out the reaction 4-imidazolone-5-propanoate = trans-urocanate + H2O. The protein operates within amino-acid degradation; L-histidine degradation into L-glutamate; N-formimidoyl-L-glutamate from L-histidine: step 2/3. In terms of biological role, catalyzes the conversion of urocanate to 4-imidazolone-5-propionate. The protein is Urocanate hydratase of Beutenbergia cavernae (strain ATCC BAA-8 / DSM 12333 / CCUG 43141 / JCM 11478 / NBRC 16432 / NCIMB 13614 / HKI 0122).